A 152-amino-acid chain; its full sequence is Dehydratase aurZ (152 aa).

The EthD domain occupies 34–129 (PSLSEKEYRH…APDHVNFADT (96 aa)).

This sequence belongs to the tpcK family.

The enzyme catalyses naphtopyrone YWA1 = norrubrofusarin + H2O + H(+). Its pathway is pigment biosynthesis. Its function is as follows. Dehydratase; part of the gene cluster that mediates the biosynthesis of aurofusarin, a red mycelium pigment which is acting as a mycotoxin. The first step is performed by the polyketide synthase which condenses one acetyl-CoA and 6 malonyl-CoA units to form the first intermediate, the cyclic heptaketide and yellow pigment YWA1. The C2 hydroxyl group in the pyrone ring of YWA1 is probably formed during ring closure by an aldol-type cyclization reaction. The dehydratase aurZ then acts as the first tailoring enzyme in the aurofusarin biosynthetic pathway by converting YWA1 to nor-rubrofusarin. Nor-rubrofusarin is then methylated to rubrofusarin by the O-methyltransferase aurJ. Rubrofusarin is then transported across the plasma membrane by the rubrofusarin-specific pump aurT for further enzymatic processing by the extracellular complex composed of GIP1, aurF, aurO and aurS to yield aurofusarin. This chain is Dehydratase aurZ, found in Gibberella zeae (strain ATCC MYA-4620 / CBS 123657 / FGSC 9075 / NRRL 31084 / PH-1) (Wheat head blight fungus).